The following is a 216-amino-acid chain: MOB kinase activator-like 1 homolog C (216 aa).

4 residues coordinate Zn(2+): Cys78, Cys83, His160, and His165.

The protein belongs to the MOB1/phocein family.

In Dictyostelium discoideum (Social amoeba), this protein is MOB kinase activator-like 1 homolog C (mobC).